The chain runs to 472 residues: E1B 55 kDa protein (472 aa).

Positions 1–90 (MERPNPSVGG…GQRGEKRKLE (90 aa)) are disordered. Over residues 32–44 (RLLAGAASARSGS) the composition is skewed to low complexity. Gly residues predominate over residues 45–57 (SAGGGGGGGGGGE). Residues S468 and S469 each carry the phosphoserine modification.

It belongs to the adenoviridae E1B 55 kDa protein family. In terms of assembly, interacts with host PML-4 and PML-5; this interaction promotes efficient subnuclear targeting of E1B-55K to PML nuclear bodies. Interacts with E4-ORF3 protein. Interacts with E4-ORF6 protein.

Its subcellular location is the host nucleus. It localises to the host cytoplasm. In terms of biological role, plays a major role to prevent cellular inhibition of viral genome replication. Assembles an SCF-like E3 ubiquitin ligase complex based on the cellular proteins ELOB, ELOC, CUL5 and RBX1, in cooperation with viral E4orf6. This viral RING-type ligase ubiquitinates cellular substrates and targets them to proteasomal degradation: TP53/p53, LIG4, MRE11-RAD50-NBS1 (MRN) complex, ITGA3, DAXX and BLM. E1B-55K probably acts as the substrate-specific adapter of the SCF-like E3 ubiquitin ligase complex. Degradation of host TP53/p53 activity is essential for preventing E1A-induced TP53 accumulation that would otherwise lead to cell apoptosis and growth arrest. E1B-55K also inactivates TP53 transcription-factor activity by binding its transactivation domain. E1B-55K also functions as a SUMO1 E3 ligase for TP53 which causes the latter to be sequestered in promyelocytic leukemia (PML) nuclear bodies thereby contributing to maximal inhibition of TP53 function. In Homo sapiens (Human), this protein is E1B 55 kDa protein.